Here is a 276-residue protein sequence, read N- to C-terminus: UDP-3-O-acyl-N-acetylglucosamine deacetylase (276 aa).

Positions 76, 234, and 238 each coordinate Zn(2+). His261 serves as the catalytic Proton donor.

Belongs to the LpxC family. Zn(2+) is required as a cofactor.

The enzyme catalyses a UDP-3-O-[(3R)-3-hydroxyacyl]-N-acetyl-alpha-D-glucosamine + H2O = a UDP-3-O-[(3R)-3-hydroxyacyl]-alpha-D-glucosamine + acetate. It participates in glycolipid biosynthesis; lipid IV(A) biosynthesis; lipid IV(A) from (3R)-3-hydroxytetradecanoyl-[acyl-carrier-protein] and UDP-N-acetyl-alpha-D-glucosamine: step 2/6. Its function is as follows. Catalyzes the hydrolysis of UDP-3-O-myristoyl-N-acetylglucosamine to form UDP-3-O-myristoylglucosamine and acetate, the committed step in lipid A biosynthesis. In Synechocystis sp. (strain ATCC 27184 / PCC 6803 / Kazusa), this protein is UDP-3-O-acyl-N-acetylglucosamine deacetylase.